The sequence spans 219 residues: Probable transcriptional regulator flp (219 aa).

The HTH crp-type domain maps to 144 to 212 (DSINVRLTHY…GKQVRILNAE (69 aa)). The H-T-H motif DNA-binding region spans 191 to 210 (KRLAEEKLIERSGKQVRILN).

This is Probable transcriptional regulator flp (flp) from Lacticaseibacillus casei (Lactobacillus casei).